Here is a 701-residue protein sequence, read N- to C-terminus: Elongation factor G 2 (701 aa).

The tr-type G domain maps to 8 to 290 (ERYRNIGISA…AVIDYLPSPA (283 aa)). GTP-binding positions include 17 to 24 (AHIDAGKT), 88 to 92 (DTPGH), and 142 to 145 (NKMD).

This sequence belongs to the TRAFAC class translation factor GTPase superfamily. Classic translation factor GTPase family. EF-G/EF-2 subfamily.

The protein resides in the cytoplasm. Its function is as follows. Catalyzes the GTP-dependent ribosomal translocation step during translation elongation. During this step, the ribosome changes from the pre-translocational (PRE) to the post-translocational (POST) state as the newly formed A-site-bound peptidyl-tRNA and P-site-bound deacylated tRNA move to the P and E sites, respectively. Catalyzes the coordinated movement of the two tRNA molecules, the mRNA and conformational changes in the ribosome. The protein is Elongation factor G 2 of Cupriavidus pinatubonensis (strain JMP 134 / LMG 1197) (Cupriavidus necator (strain JMP 134)).